A 49-amino-acid chain; its full sequence is Small ribosomal subunit protein eS31 (49 aa).

Zn(2+) contacts are provided by Cys21, Cys24, Cys39, and Cys42. The C4-type zinc finger occupies 21–42 (CPRCGNGVFLAEHEDRMSCGRC).

Belongs to the eukaryotic ribosomal protein eS31 family. As to quaternary structure, part of the 30S ribosomal subunit. Zn(2+) serves as cofactor.

The sequence is that of Small ribosomal subunit protein eS31 from Methanothrix thermoacetophila (strain DSM 6194 / JCM 14653 / NBRC 101360 / PT) (Methanosaeta thermophila).